The following is a 202-amino-acid chain: Small ribosomal subunit protein uS2 (202 aa).

The protein belongs to the universal ribosomal protein uS2 family.

The protein is Small ribosomal subunit protein uS2 (rps2) of Pyrococcus abyssi (strain GE5 / Orsay).